Reading from the N-terminus, the 689-residue chain is Glycine--tRNA ligase beta subunit (689 aa).

Belongs to the class-II aminoacyl-tRNA synthetase family. Tetramer of two alpha and two beta subunits.

Its subcellular location is the cytoplasm. It catalyses the reaction tRNA(Gly) + glycine + ATP = glycyl-tRNA(Gly) + AMP + diphosphate. In Salmonella paratyphi A (strain ATCC 9150 / SARB42), this protein is Glycine--tRNA ligase beta subunit.